The sequence spans 171 residues: Adenine phosphoribosyltransferase (171 aa).

It belongs to the purine/pyrimidine phosphoribosyltransferase family. As to quaternary structure, homodimer.

The protein localises to the cytoplasm. The catalysed reaction is AMP + diphosphate = 5-phospho-alpha-D-ribose 1-diphosphate + adenine. It functions in the pathway purine metabolism; AMP biosynthesis via salvage pathway; AMP from adenine: step 1/1. Catalyzes a salvage reaction resulting in the formation of AMP, that is energically less costly than de novo synthesis. This Christiangramia forsetii (strain DSM 17595 / CGMCC 1.15422 / KT0803) (Gramella forsetii) protein is Adenine phosphoribosyltransferase.